The following is a 200-amino-acid chain: MYAYFRGELISSSRDNAIVDVGGVAYRLLISNSTYRQLPSSGDQVKLLAHLHVKEDLMQLYGFIEEEERQLFLLLLSISGVGPKLALAILSGLPVEEIQEAIMANKPETLFGISGVGKKTAARIILELRDRILKLQQTRPGKTAGAGSVASLSEDALQALMTLGFSRASAQQAVTRALLSAENPGVEDIVREALQNIRNH.

The domain I stretch occupies residues 1 to 64 (MYAYFRGELI…EDLMQLYGFI (64 aa)). A domain II region spans residues 65–143 (EEEERQLFLL…KLQQTRPGKT (79 aa)). The segment at 144–154 (AGAGSVASLSE) is flexible linker. The interval 154 to 200 (EDALQALMTLGFSRASAQQAVTRALLSAENPGVEDIVREALQNIRNH) is domain III.

The protein belongs to the RuvA family. In terms of assembly, homotetramer. Forms an RuvA(8)-RuvB(12)-Holliday junction (HJ) complex. HJ DNA is sandwiched between 2 RuvA tetramers; dsDNA enters through RuvA and exits via RuvB. An RuvB hexamer assembles on each DNA strand where it exits the tetramer. Each RuvB hexamer is contacted by two RuvA subunits (via domain III) on 2 adjacent RuvB subunits; this complex drives branch migration. In the full resolvosome a probable DNA-RuvA(4)-RuvB(12)-RuvC(2) complex forms which resolves the HJ.

It is found in the cytoplasm. The RuvA-RuvB-RuvC complex processes Holliday junction (HJ) DNA during genetic recombination and DNA repair, while the RuvA-RuvB complex plays an important role in the rescue of blocked DNA replication forks via replication fork reversal (RFR). RuvA specifically binds to HJ cruciform DNA, conferring on it an open structure. The RuvB hexamer acts as an ATP-dependent pump, pulling dsDNA into and through the RuvAB complex. HJ branch migration allows RuvC to scan DNA until it finds its consensus sequence, where it cleaves and resolves the cruciform DNA. This is Holliday junction branch migration complex subunit RuvA from Prosthecochloris aestuarii (strain DSM 271 / SK 413).